A 279-amino-acid chain; its full sequence is Tryptophan synthase alpha chain (279 aa).

Active-site proton acceptor residues include E63 and D74.

This sequence belongs to the TrpA family. Tetramer of two alpha and two beta chains.

It catalyses the reaction (1S,2R)-1-C-(indol-3-yl)glycerol 3-phosphate + L-serine = D-glyceraldehyde 3-phosphate + L-tryptophan + H2O. It participates in amino-acid biosynthesis; L-tryptophan biosynthesis; L-tryptophan from chorismate: step 5/5. The alpha subunit is responsible for the aldol cleavage of indoleglycerol phosphate to indole and glyceraldehyde 3-phosphate. This is Tryptophan synthase alpha chain from Prochlorococcus marinus subsp. pastoris (strain CCMP1986 / NIES-2087 / MED4).